The following is a 172-amino-acid chain: Adenine phosphoribosyltransferase (172 aa).

Belongs to the purine/pyrimidine phosphoribosyltransferase family. As to quaternary structure, homodimer.

It localises to the cytoplasm. The enzyme catalyses AMP + diphosphate = 5-phospho-alpha-D-ribose 1-diphosphate + adenine. It participates in purine metabolism; AMP biosynthesis via salvage pathway; AMP from adenine: step 1/1. Its function is as follows. Catalyzes a salvage reaction resulting in the formation of AMP, that is energically less costly than de novo synthesis. This Synechocystis sp. (strain ATCC 27184 / PCC 6803 / Kazusa) protein is Adenine phosphoribosyltransferase.